The chain runs to 117 residues: uncharacterized protein (117 aa).

A helical transmembrane segment spans residues L57 to V77.

The protein localises to the membrane. This is an uncharacterized protein from Schizosaccharomyces pombe (strain 972 / ATCC 24843) (Fission yeast).